The primary structure comprises 263 residues: Endonuclease 8 (263 aa).

The active-site Schiff-base intermediate with DNA is the Pro-2. Glu-3 (proton donor) is an active-site residue. Lys-53 (proton donor; for beta-elimination activity) is an active-site residue. Positions 70, 125, and 169 each coordinate DNA. The segment at 229–263 adopts an FPG-type zinc-finger fold; sequence KVFHRDGEACERCGGIIEKTTLSSRPFYWCPHCQK. Arg-253 serves as the catalytic Proton donor; for delta-elimination activity.

This sequence belongs to the FPG family. Requires Zn(2+) as cofactor.

It catalyses the reaction 2'-deoxyribonucleotide-(2'-deoxyribose 5'-phosphate)-2'-deoxyribonucleotide-DNA = a 3'-end 2'-deoxyribonucleotide-(2,3-dehydro-2,3-deoxyribose 5'-phosphate)-DNA + a 5'-end 5'-phospho-2'-deoxyribonucleoside-DNA + H(+). In terms of biological role, involved in base excision repair of DNA damaged by oxidation or by mutagenic agents. Acts as a DNA glycosylase that recognizes and removes damaged bases. Has a preference for oxidized pyrimidines, such as thymine glycol, 5,6-dihydrouracil and 5,6-dihydrothymine. Has AP (apurinic/apyrimidinic) lyase activity and introduces nicks in the DNA strand. Cleaves the DNA backbone by beta-delta elimination to generate a single-strand break at the site of the removed base with both 3'- and 5'-phosphates. The sequence is that of Endonuclease 8 from Salmonella paratyphi B (strain ATCC BAA-1250 / SPB7).